The chain runs to 316 residues: Acetyl-coenzyme A carboxylase carboxyl transferase subunit alpha (316 aa).

The 255-residue stretch at arginine 39 to methionine 293 folds into the CoA carboxyltransferase C-terminal domain.

Belongs to the AccA family. As to quaternary structure, acetyl-CoA carboxylase is a heterohexamer composed of biotin carboxyl carrier protein (AccB), biotin carboxylase (AccC) and two subunits each of ACCase subunit alpha (AccA) and ACCase subunit beta (AccD).

The protein resides in the cytoplasm. It carries out the reaction N(6)-carboxybiotinyl-L-lysyl-[protein] + acetyl-CoA = N(6)-biotinyl-L-lysyl-[protein] + malonyl-CoA. The protein operates within lipid metabolism; malonyl-CoA biosynthesis; malonyl-CoA from acetyl-CoA: step 1/1. Component of the acetyl coenzyme A carboxylase (ACC) complex. First, biotin carboxylase catalyzes the carboxylation of biotin on its carrier protein (BCCP) and then the CO(2) group is transferred by the carboxyltransferase to acetyl-CoA to form malonyl-CoA. The protein is Acetyl-coenzyme A carboxylase carboxyl transferase subunit alpha of Pseudomonas aeruginosa (strain LESB58).